Reading from the N-terminus, the 195-residue chain is Pyridoxal 5'-phosphate synthase subunit PdxT (195 aa).

46–48 (GES) lines the L-glutamine pocket. Cys78 acts as the Nucleophile in catalysis. L-glutamine-binding positions include Arg107 and 135–136 (IR). Residues His172 and Glu174 each act as charge relay system in the active site.

Belongs to the glutaminase PdxT/SNO family. As to quaternary structure, in the presence of PdxS, forms a dodecamer of heterodimers. Only shows activity in the heterodimer.

It catalyses the reaction aldehydo-D-ribose 5-phosphate + D-glyceraldehyde 3-phosphate + L-glutamine = pyridoxal 5'-phosphate + L-glutamate + phosphate + 3 H2O + H(+). It carries out the reaction L-glutamine + H2O = L-glutamate + NH4(+). It functions in the pathway cofactor biosynthesis; pyridoxal 5'-phosphate biosynthesis. Functionally, catalyzes the hydrolysis of glutamine to glutamate and ammonia as part of the biosynthesis of pyridoxal 5'-phosphate. The resulting ammonia molecule is channeled to the active site of PdxS. This Corynebacterium jeikeium (strain K411) protein is Pyridoxal 5'-phosphate synthase subunit PdxT.